The primary structure comprises 98 residues: Aspartyl/glutamyl-tRNA(Asn/Gln) amidotransferase subunit C (98 aa).

It belongs to the GatC family. In terms of assembly, heterotrimer of A, B and C subunits.

It catalyses the reaction L-glutamyl-tRNA(Gln) + L-glutamine + ATP + H2O = L-glutaminyl-tRNA(Gln) + L-glutamate + ADP + phosphate + H(+). The enzyme catalyses L-aspartyl-tRNA(Asn) + L-glutamine + ATP + H2O = L-asparaginyl-tRNA(Asn) + L-glutamate + ADP + phosphate + 2 H(+). Its function is as follows. Allows the formation of correctly charged Asn-tRNA(Asn) or Gln-tRNA(Gln) through the transamidation of misacylated Asp-tRNA(Asn) or Glu-tRNA(Gln) in organisms which lack either or both of asparaginyl-tRNA or glutaminyl-tRNA synthetases. The reaction takes place in the presence of glutamine and ATP through an activated phospho-Asp-tRNA(Asn) or phospho-Glu-tRNA(Gln). This Paenarthrobacter aurescens (strain TC1) protein is Aspartyl/glutamyl-tRNA(Asn/Gln) amidotransferase subunit C.